We begin with the raw amino-acid sequence, 433 residues long: 3-phosphoshikimate 1-carboxyvinyltransferase (433 aa).

3 residues coordinate 3-phosphoshikimate: Lys15, Ser16, and Arg20. Residue Lys15 coordinates phosphoenolpyruvate. Residues Gly96 and Arg124 each contribute to the phosphoenolpyruvate site. Ser169, Gln171, Ser195, Asp318, and Lys345 together coordinate 3-phosphoshikimate. Residue Gln171 coordinates phosphoenolpyruvate. The active-site Proton acceptor is the Asp318. Arg349 and Arg393 together coordinate phosphoenolpyruvate.

The protein belongs to the EPSP synthase family. As to quaternary structure, monomer.

It is found in the cytoplasm. The catalysed reaction is 3-phosphoshikimate + phosphoenolpyruvate = 5-O-(1-carboxyvinyl)-3-phosphoshikimate + phosphate. Its pathway is metabolic intermediate biosynthesis; chorismate biosynthesis; chorismate from D-erythrose 4-phosphate and phosphoenolpyruvate: step 6/7. Its function is as follows. Catalyzes the transfer of the enolpyruvyl moiety of phosphoenolpyruvate (PEP) to the 5-hydroxyl of shikimate-3-phosphate (S3P) to produce enolpyruvyl shikimate-3-phosphate and inorganic phosphate. The chain is 3-phosphoshikimate 1-carboxyvinyltransferase from Pelodictyon phaeoclathratiforme (strain DSM 5477 / BU-1).